The chain runs to 334 residues: MEVAEANSPTEEEEEEEEEEGEEPISEPRPHTRSNPEGAEDRAIGAQANVGSRSEGEGEAATADDGAASVPGAVPKPWQVPAPASEVQIRTPRVNCPEKVIICLDLSEEMSVPKLESFNGSRTNALNVSQKMVEMFVRTKHKIDKSHEFALVVVNDDSAWLSGLTSDPRELCSCLYDLETASCSTFNLEGLFSLIQQKTELPVTENVQTIPPPYVVRTILVYSRPPCQPQFSLTEPMKKMFQCPYFFFDIIYIHSGPEEKEDDMSWKDMFAFMGSLDTKGTSYKYAVALAGPALELHNCVAKLLAHPLQRPCQSHASYSLLEEDEEAGEGEATV.

M1 carries the post-translational modification N-acetylmethionine. The interval 1–79 (MEVAEANSPT…VPGAVPKPWQ (79 aa)) is disordered. S8 carries the post-translational modification Phosphoserine. The span at 10 to 25 (TEEEEEEEEEEGEEPI) shows a compositional bias: acidic residues. Phosphoserine is present on residues S34 and S54. Residues 59 to 68 (EAATADDGAA) are compositionally biased toward low complexity. Residues 100-303 (VIICLDLSEE…LELHNCVAKL (204 aa)) are VWFA-like.

This sequence belongs to the BABAM1 family. Component of the ARISC complex, at least composed of UIMC1/RAP80, ABRAXAS1, BRCC3/BRCC36, BABAM2 and BABAM1/NBA1. Component of the BRCA1-A complex, at least composed of BRCA1, BARD1, UIMC1/RAP80, ABRAXAS1, BRCC3/BRCC36, BABAM2 and BABAM1/NBA1. In the BRCA1-A complex, interacts directly with ABRAXAS1 and BABAM2. Component of the BRISC complex, at least composed of ABRAXAS2, BRCC3/BRCC36, BABAM2 and BABAM1/NBA1. Identified in a complex with SHMT2 and the other subunits of the BRISC complex.

The protein localises to the cytoplasm. Its subcellular location is the nucleus. In terms of biological role, component of the BRCA1-A complex, a complex that specifically recognizes 'Lys-63'-linked ubiquitinated histones H2A and H2AX at DNA lesions sites, leading to target the BRCA1-BARD1 heterodimer to sites of DNA damage at double-strand breaks (DSBs). The BRCA1-A complex also possesses deubiquitinase activity that specifically removes 'Lys-63'-linked ubiquitin on histones H2A and H2AX. In the BRCA1-A complex, it is required for the complex integrity and its localization at DSBs. Component of the BRISC complex, a multiprotein complex that specifically cleaves 'Lys-63'-linked ubiquitin in various substrates. In these 2 complexes, it is probably required to maintain the stability of BABAM2 and help the 'Lys-63'-linked deubiquitinase activity mediated by BRCC3/BRCC36 component. The BRISC complex is required for normal mitotic spindle assembly and microtubule attachment to kinetochores via its role in deubiquitinating NUMA1. Plays a role in interferon signaling via its role in the deubiquitination of the interferon receptor IFNAR1; deubiquitination increases IFNAR1 activity by enhancing its stability and cell surface expression. Down-regulates the response to bacterial lipopolysaccharide (LPS) via its role in IFNAR1 deubiquitination. In Rattus norvegicus (Rat), this protein is BRISC and BRCA1-A complex member 1 (Babam1).